Here is a 1114-residue protein sequence, read N- to C-terminus: MEAAVGVPDGGDQGGAGPREDATPMDAYLRKLGLYRKLVAKDGSCLFRAVAEQVLHSQSRHVEVRMACIHYLRENREKFEAFIEGSFEEYLKRLENPQEWVGQVEISALSLMYRKDFIIYREPNVSPSQVTENNFPEKVLLCFSNGNHYDIVYPIKYKESSAMCQSLLYELLYEKVFKTDVSKIVMELDTLEVADEDNSEISDSEDDSCKSKTAAAAADVNGFKPLSGNEQLKNNGNSTSLPLSRKVLKSLNPAVYRNVEYEIWLKSKQAQQKRDYSIAAGLQYEVGDKCQVRLDHNGKFLNADVQGIHSENGPVLVEELGKKHTSKNLKAPPPESWNTVSGKKMKKPSTSGQNFHSDVDYRGPKNPSKPIKAPSALPPRLQHPSGVRQHAFSSHSSGSQSQKFSSEHKNLSRTPSQIIRKPDRERVEDFDHTSRESNYFGLSPEERREKQAIEESRLLYEIQNRDEQAFPALSSSSVNQSASQSSNPCVQRKSSHVGDRKGSRRRMDTEERKDKDSIHGHSQLDKRPEPSTLENITDDKYATVSSPSKSKKLECPSPAEQKPAEHVSLSNPAPLLVSPEVHLTPAVPSLPATVPAWPSEPTTFGPTGVPAPIPVLSVTQTLTTGPDSAVSQAHLTPSPVPVSIQAVNQPLMPLPQTLSLYQDPLYPGFPCNEKGDRAIVPPYSLCQTGEDLPKDKNILRFFFNLGVKAYSCPMWAPHSYLYPLHQAYLAACRMYPKVPVPVYPHNPWFQEAPAAQNESDCTCTDAHFPMQTEASVNGQMPQPEIGPPTFSSPLVIPPSQVSESHGQLSYQADLESETPGQLLHADYEESLSGKNMFPQPSFGPNPFLGPVPIAPPFFPHVWYGYPFQGFIENPVMRQNIVLPSDEKGELDLSLENLDLSKDCGSVSTVDEFPEARGEHVHSLPEASVSSKPDEGRTEQSSQTRKADTALASIPPVAEGKAHPPTQILNRERETVPVELEPKRTIQSLKEKTEKVKDPKTAADVVSPGANSVDSRVQRPKEESSEDENEVSNILRSGRSKQFYNQTYGSRKYKSDWGYSGRGGYQHVRSEESWKGQPSRSRDEGYQYHRNVRGRPFRGDRRRSGMGDGHRGQHT.

Position 1 is an N-acetylmethionine (Met1). The segment at Met1 to Ala22 is disordered. Gly residues predominate over residues Pro8–Gly17. The OTU domain occupies Leu34–Ile155. A cys-loop region spans residues Val39 to Cys45. Asp42 is an active-site residue. The Nucleophile role is filled by Cys45. Positions Leu94–Val104 are variable-loop. Tyr120 is subject to Phosphotyrosine. Phosphoserine occurs at positions 126 and 128. Phosphothreonine is present on Thr131. Positions Phe143–His148 are his-loop. Residue His148 is part of the active site. Residues Ser166, Ser199, Ser202, Ser204, and Ser341 each carry the phosphoserine modification. The segment at Lys323–Glu449 is disordered. The segment covering Phe392–Phe404 has biased composition (low complexity). The segment covering Arg420 to Arg435 has biased composition (basic and acidic residues). The residue at position 439 (Tyr439) is a Phosphotyrosine. Residue Ser443 is modified to Phosphoserine. Tyr460 carries the phosphotyrosine modification. The tract at residues Ala472–Val567 is disordered. The span at Ser474–Asn487 shows a compositional bias: low complexity. Residues His496–Glu529 are compositionally biased toward basic and acidic residues. Phosphoserine is present on residues Ser546, Ser893, and Ser900. Residues Glu911–Thr1114 form a disordered region. Composition is skewed to basic and acidic residues over residues Pro913–Ser922 and Asn969–Thr1000. 5 positions are modified to phosphoserine: Ser1006, Ser1011, Ser1014, Ser1023, and Ser1024. The segment covering Ser1039–Gly1048 has biased composition (polar residues). Ser1049 is modified (phosphoserine). 2 stretches are compositionally biased toward basic and acidic residues: residues Val1067–Gln1086 and Phe1096–Thr1114.

Interacts with MYD88; the interaction is direct. Interacts with ALKBH3; the interaction is direct. Interacts with USP7; the interaction is direct. Interacts with USP9X; the interaction is direct. Phosphorylated on Ser-202 and Ser-204 likely by CSNK2A1-CSNK2A2 serine/threonine-protein kinase complex. Activates 'Lys-63'-specific deubiquitinase activity.

It localises to the cytoplasm. The protein localises to the nucleus. It catalyses the reaction Thiol-dependent hydrolysis of ester, thioester, amide, peptide and isopeptide bonds formed by the C-terminal Gly of ubiquitin (a 76-residue protein attached to proteins as an intracellular targeting signal).. With respect to regulation, phosphorylation on Ser-202 and Ser-204 induces 'Lys-63'-specific deubiquitinase activity. Functionally, deubiquitinase which hydrolyzes the isopeptide bond between the ubiquitin C-terminus and the lysine epsilon-amino group of the target protein. May negatively regulate inflammatory and pathogen recognition signaling in innate immune response. Upon phosphorylation at Ser-202 and Ser-204 residues, via IL-1 receptor and Toll-like receptor signaling pathway, specifically deubiquitinates 'Lys-63'-polyubiquitinated MYD88 adapter protein triggering down-regulation of NF-kappa-B-dependent transcription of inflammatory mediators. Independently of the catalytic activity, acts as a scaffold for alternative deubiquitinases to assemble specific deubiquitinase-substrate complexes. Associates with USP7 and USP9X deubiquitinases to stabilize alkylation repair enzyme ALKBH3, thereby promoting the repair of alkylated DNA lesions. In Homo sapiens (Human), this protein is OTU domain-containing protein 4.